The chain runs to 336 residues: Potassium channel subfamily K member 1 (336 aa).

The Cytoplasmic portion of the chain corresponds to 1-20; the sequence is MLQSLAGSSCVRLVERHRSA. Residues 21 to 41 traverse the membrane as a helical segment; that stretch reads RCFGFLVLGYLLYLVFGAVVF. Over 42–103 the chain is Extracellular; that stretch reads SSVELPYEDL…SNASGNWNWD (62 aa). Residue Asn95 is glycosylated (N-linked (GlcNAc...) asparagine). An intramembrane region (helical) is located at residues 104 to 116; it reads FTSALFFASTVLS. Residues 117–122 lie within the membrane without spanning it; it reads TTGYGH. The tract at residues 117–122 is selectivity filter 1; it reads TTGYGH. Topologically, residues 123–132 are extracellular; sequence TVPLSDGGKA. The chain crosses the membrane as a helical span at residues 133 to 156; the sequence is FCIIYSVIGIPFTLLFLTAVVQRI. Residues 157-181 lie on the Cytoplasmic side of the membrane; the sequence is TVHVTRRPVLYFHIRWGFSKQVVAI. Residues 182–202 form a helical membrane-spanning segment; the sequence is VHAVLLGFVTVSCFFFIPAAV. Residues 203–211 are Extracellular-facing; the sequence is FSVLEDDWN. An intramembrane region (helical) is located at residues 212–224; the sequence is FLESFYFCFISLS. The interval 225–230 is selectivity filter 2; the sequence is TIGLGD. Residues 225-231 lie within the membrane without spanning it; sequence TIGLGDY. At 232–243 the chain is on the extracellular side; the sequence is VPGEGYNQKFRE. A helical membrane pass occupies residues 244–267; it reads LYKIGITCYLLLGLIAMLVVLETF. Over 268–336 the chain is Cytoplasmic; sequence CELHELKKFR…SACMDGPANH (69 aa). Residue Lys274 forms a Glycyl lysine isopeptide (Lys-Gly) (interchain with G-Cter in SUMO) linkage. The interval 293–299 is important for intracellular retention in recycling endosomes; that stretch reads IIEHDQL. The interval 315-336 is disordered; that stretch reads QKQNEPFVATQSSACMDGPANH. Ser326 carries the post-translational modification Phosphoserine.

It belongs to the two pore domain potassium channel (TC 1.A.1.8) family. In terms of assembly, homodimer; disulfide-linked. Heterodimer with KCNK2; disulfide-linked. In astrocytes, forms mostly heterodimeric potassium channels with KCNK2, with only a minor proportion of functional channels containing homodimeric KCNK1. Interacts with KCNK3 and KCNK9, forming functional heterodimeric channels. Interacts with GNG4. Identified in a complex with PSD and ARF6; interacts only with PSD that is bound to ARF6. Interacts with UBE2I. Sumoylation is controversial. Sumoylated by UBE2I. Not sumoylated when expressed in xenopus oocytes or mammalian cells. Sumoylation inactivates the channel, but does not interfere with expression at the cell membrane. Sumoylation of a single subunit is sufficient to silence the dimeric channel. Sumoylation of KCNK1 is sufficient to silence heterodimeric channels formed by KCNK1 and KCNK3 or KCNK9. Desumoylated by SENP1; this activates the channel. Desumoylated by SENP1; this strongly increases halothane-mediated activation of heterodimeric channels formed with KCNK9. SENP1 treatment has no effect.

Its subcellular location is the cell membrane. The protein localises to the recycling endosome. It is found in the synaptic cell membrane. The protein resides in the cytoplasmic vesicle. It localises to the perikaryon. Its subcellular location is the cell projection. The protein localises to the dendrite. It is found in the apical cell membrane. It carries out the reaction K(+)(in) = K(+)(out). The catalysed reaction is NH4(+)(in) = NH4(+)(out). The enzyme catalyses Na(+)(in) = Na(+)(out). It catalyses the reaction Rb(+)(in) = Rb(+)(out). It carries out the reaction Cs(+)(in) = Cs(+)(out). The catalysed reaction is Li(+)(in) = Li(+)(out). The enzyme catalyses L-glutamate(out) = L-glutamate(in). It catalyses the reaction chloride(in) = chloride(out). Functionally, ion channel that contributes to passive transmembrane potassium transport and to the regulation of the resting membrane potential in brain astrocytes, but also in kidney and in other tissues. Forms dimeric channels through which potassium ions pass in accordance with their electrochemical gradient. The channel is selective for K(+) ions at physiological potassium concentrations and at neutral pH, but becomes permeable to Na(+) at subphysiological K(+) levels, and upon acidification of the extracellular medium. The homodimer has very low potassium channel activity, when expressed in heterologous systems, and can function as weakly inward rectifying potassium channel. Channel activity is modulated by activation of serotonin receptors. Heterodimeric channels containing KCNK1 and KCNK2 have much higher activity, and may represent the predominant form in astrocytes. Heterodimeric channels containing KCNK1 and KCNK3 or KCNK9 have much higher activity. Heterodimeric channels formed by KCNK1 and KCNK9 may contribute to halothane-sensitive currents. Mediates outward rectifying potassium currents in dentate gyrus granule cells and contributes to the regulation of their resting membrane potential. Contributes to the regulation of action potential firing in dentate gyrus granule cells and down-regulates their intrinsic excitability. In astrocytes, the heterodimer formed by KCNK1 and KCNK2 is required for rapid glutamate release in response to activation of G-protein coupled receptors, such as F2R and CNR1. Required for normal ion and water transport in the kidney. Contributes to the regulation of the resting membrane potential of pancreatic beta cells. The low channel activity of homodimeric KCNK1 may be due to sumoylation. The low channel activity may be due to rapid internalization from the cell membrane and retention in recycling endosomes. Permeable to monovalent cations with ion selectivity for K(+) &gt; Rb(+) &gt;&gt; NH4(+) &gt;&gt; Cs(+) = Na(+) = Li(+). This chain is Potassium channel subfamily K member 1, found in Pongo abelii (Sumatran orangutan).